A 386-amino-acid polypeptide reads, in one-letter code: Succinate--CoA ligase [ADP-forming] subunit beta (386 aa).

An ATP-grasp domain is found at 9–244 (KEILKQYGVK…LDEEDEKEIE (236 aa)). ATP contacts are provided by residues Lys-46, 53-55 (GRG), Glu-99, Cys-102, and Glu-107. Positions 199 and 213 each coordinate Mg(2+). Residues Asn-264 and 321–323 (GIM) each bind substrate.

The protein belongs to the succinate/malate CoA ligase beta subunit family. As to quaternary structure, heterotetramer of two alpha and two beta subunits. Requires Mg(2+) as cofactor.

It catalyses the reaction succinate + ATP + CoA = succinyl-CoA + ADP + phosphate. The catalysed reaction is GTP + succinate + CoA = succinyl-CoA + GDP + phosphate. It functions in the pathway carbohydrate metabolism; tricarboxylic acid cycle; succinate from succinyl-CoA (ligase route): step 1/1. In terms of biological role, succinyl-CoA synthetase functions in the citric acid cycle (TCA), coupling the hydrolysis of succinyl-CoA to the synthesis of either ATP or GTP and thus represents the only step of substrate-level phosphorylation in the TCA. The beta subunit provides nucleotide specificity of the enzyme and binds the substrate succinate, while the binding sites for coenzyme A and phosphate are found in the alpha subunit. The polypeptide is Succinate--CoA ligase [ADP-forming] subunit beta (Brevibacillus brevis (strain 47 / JCM 6285 / NBRC 100599)).